Consider the following 163-residue polypeptide: Thiol peroxidase (163 aa).

Residues 16 to 162 enclose the Thioredoxin domain; it reads LQVGDTAHDF…YDAAIAAVKN (147 aa). Cys-58 serves as the catalytic Cysteine sulfenic acid (-SOH) intermediate. Cys-58 and Cys-92 form a disulfide bridge.

It belongs to the peroxiredoxin family. Tpx subfamily. As to quaternary structure, homodimer.

The catalysed reaction is a hydroperoxide + [thioredoxin]-dithiol = an alcohol + [thioredoxin]-disulfide + H2O. In terms of biological role, thiol-specific peroxidase that catalyzes the reduction of hydrogen peroxide and organic hydroperoxides to water and alcohols, respectively. Plays a role in cell protection against oxidative stress by detoxifying peroxides. The sequence is that of Thiol peroxidase from Streptococcus gordonii.